The sequence spans 260 residues: MIFHANPGVIDLGVNIDHVATLRNARGTVYPDPIRAALLAEQAGADLITLHLREDRRHIRDADVRALRPQLATRMNLECALTQEMLDIACEIRPQDVCLVPERREEVTTEGGLDVAGRFEQVKAACAQLAGAGIRVSLFIDADADQIAAAAACGAPVIELHTGRYADAHTPDEQALEFRRIADGVDAGQKHGLVVNAGHGLHYTNVQPIAALPGIKELNIGHAIVAHAVFAGWENAVREMKAIMVAARLGTRYPAAGAPA.

Asn-15 is a binding site for 3-amino-2-oxopropyl phosphate. 17-18 (DH) lines the 1-deoxy-D-xylulose 5-phosphate pocket. Position 26 (Arg-26) interacts with 3-amino-2-oxopropyl phosphate. His-51 (proton acceptor) is an active-site residue. 1-deoxy-D-xylulose 5-phosphate is bound by residues Arg-53 and His-58. Catalysis depends on Glu-78, which acts as the Proton acceptor. 1-deoxy-D-xylulose 5-phosphate is bound at residue Thr-108. His-199 (proton donor) is an active-site residue. 3-amino-2-oxopropyl phosphate-binding positions include Gly-200 and 221 to 222 (GH).

This sequence belongs to the PNP synthase family. In terms of assembly, homooctamer; tetramer of dimers.

Its subcellular location is the cytoplasm. The enzyme catalyses 3-amino-2-oxopropyl phosphate + 1-deoxy-D-xylulose 5-phosphate = pyridoxine 5'-phosphate + phosphate + 2 H2O + H(+). It functions in the pathway cofactor biosynthesis; pyridoxine 5'-phosphate biosynthesis; pyridoxine 5'-phosphate from D-erythrose 4-phosphate: step 5/5. In terms of biological role, catalyzes the complicated ring closure reaction between the two acyclic compounds 1-deoxy-D-xylulose-5-phosphate (DXP) and 3-amino-2-oxopropyl phosphate (1-amino-acetone-3-phosphate or AAP) to form pyridoxine 5'-phosphate (PNP) and inorganic phosphate. This Cupriavidus necator (strain ATCC 17699 / DSM 428 / KCTC 22496 / NCIMB 10442 / H16 / Stanier 337) (Ralstonia eutropha) protein is Pyridoxine 5'-phosphate synthase.